The chain runs to 1602 residues: Calmodulin-regulated spectrin-associated protein 1 (1602 aa).

The Calponin-homology (CH) domain maps to 216 to 331 (ESPAHQKVRY…FIAELFWWFE (116 aa)). A phosphoserine mark is found at S217, S371, S375, S416, and S431. Positions 426–471 (QKQQKSIQGEDIPDQRHRSNSLTRVDGQPRGAAIAWPEKKTRPASQ) are disordered. T512 is modified (phosphothreonine). A phosphoserine mark is found at S563, S575, and S589. A compositionally biased stretch (basic and acidic residues) spans 603–620 (AKEKQVITKEDERGEGRP). Residues 603–637 (AKEKQVITKEDERGEGRPRSIVSRRPSEGPQPLVR) are disordered. Phosphoserine occurs at positions 629, 722, 728, 738, and 740. Residues 772–789 (KLQEDMKVKEHEDKDDAS) show a composition bias toward basic and acidic residues. Disordered stretches follow at residues 772 to 808 (KLQEDMKVKEHEDKDDASGRSSPCLSTASQMSSVSMA) and 825 to 870 (LNSC…GKDP). 2 stretches are compositionally biased toward low complexity: residues 797–808 (STASQMSSVSMA) and 830–841 (TKSSTSSSQKTT). Residues 857–869 (QKREQSPSQHGKD) are compositionally biased toward basic and acidic residues. The sufficient for interaction with SPTBN1 stretch occupies residues 871 to 892 (ASLLASELVQLHMQLEEKRRAI). Coiled-coil stretches lie at residues 873–909 (LLASELVQLHMQLEEKRRAIEAQKKKMEALSARQRLK) and 1016–1048 (DVNECDLSIEKLNETISTLQQAILKISQQQEQL). The sufficient for interaction with calmodulin stretch occupies residues 903 to 922 (SARQRLKLGKAAFLHVVKKG). Disordered stretches follow at residues 1075–1165 (FVEP…GKCL), 1206–1226 (KEVGSSSSDVSGKESVPVEEP), and 1301–1448 (ARVR…DWET). The residue at position 1080 (S1080) is a Phosphoserine. Positions 1103–1114 (RPAELKVPKDRP) are enriched in basic and acidic residues. Over residues 1115 to 1127 (QGSSRSKTPTPSV) the composition is skewed to polar residues. A compositionally biased stretch (low complexity) spans 1206 to 1220 (KEVGSSSSDVSGKES). A coiled-coil region spans residues 1291–1343 (LLKQQRKAEEARVRKQQLEAEVELKRDEARRKAEEDRVRKEEEKARRELIKQE). Residues 1301–1346 (ARVRKQQLEAEVELKRDEARRKAEEDRVRKEEEKARRELIKQEYLR) are compositionally biased toward basic and acidic residues. Over residues 1361–1372 (PKSKPKKPRPKS) the composition is skewed to basic residues. Polar residues predominate over residues 1380–1392 (SDSGTKCSSTPDN). Low complexity predominate over residues 1393–1410 (LSRTQSGSSLSLASAATT). S1398 and S1427 each carry phosphoserine. The region spanning 1463-1597 (GPKLFKEPSS…QPKRPAVPKK (135 aa)) is the CKK domain. Y1537 is modified (phosphotyrosine).

It belongs to the CAMSAP1 family. In terms of assembly, interacts with spectrin via SPTBN1; the interaction is direct. Interacts with calmodulin; calcium-dependent it prevents interaction with spectrin.

The protein resides in the cytoplasm. It localises to the cytoskeleton. Functionally, key microtubule-organizing protein that specifically binds the minus-end of non-centrosomal microtubules and regulates their dynamics and organization. Specifically recognizes growing microtubule minus-ends and stabilizes microtubules. Acts on free microtubule minus-ends that are not capped by microtubule-nucleating proteins or other factors and protects microtubule minus-ends from depolymerization. In contrast to CAMSAP2 and CAMSAP3, tracks along the growing tips of minus-end microtubules without significantly affecting the polymerization rate: binds at the very tip of the microtubules minus-end and acts as a minus-end tracking protein (-TIP) that dissociates from microtubules after allowing tubulin incorporation. Through interaction with spectrin may regulate neurite outgrowth. The protein is Calmodulin-regulated spectrin-associated protein 1 (CAMSAP1) of Homo sapiens (Human).